A 324-amino-acid chain; its full sequence is Delta-aminolevulinic acid dehydratase (324 aa).

Zn(2+) contacts are provided by C120, C122, and C130. The Schiff-base intermediate with substrate role is filled by K195. Residues R205 and R216 each coordinate 5-aminolevulinate. E232 lines the Mg(2+) pocket. Catalysis depends on K247, which acts as the Schiff-base intermediate with substrate. Residues S273 and Y312 each contribute to the 5-aminolevulinate site.

The protein belongs to the ALAD family. In terms of assembly, homooctamer. It depends on Zn(2+) as a cofactor.

It catalyses the reaction 2 5-aminolevulinate = porphobilinogen + 2 H2O + H(+). Its pathway is porphyrin-containing compound metabolism; protoporphyrin-IX biosynthesis; coproporphyrinogen-III from 5-aminolevulinate: step 1/4. With respect to regulation, allosteric enzyme. Stimulated by magnesium ions. In terms of biological role, catalyzes an early step in the biosynthesis of tetrapyrroles. Binds two molecules of 5-aminolevulinate per subunit, each at a distinct site, and catalyzes their condensation to form porphobilinogen. The protein is Delta-aminolevulinic acid dehydratase (hemB) of Escherichia coli (strain K12).